We begin with the raw amino-acid sequence, 150 residues long: UPF0756 membrane protein CGSHiEE_06715 (150 aa).

The next 4 helical transmembrane spans lie at Met-1–Leu-21, Tyr-52–Gly-72, Gly-81–Ala-101, and Ile-123–Leu-143.

Belongs to the UPF0756 family.

The protein resides in the cell membrane. The sequence is that of UPF0756 membrane protein CGSHiEE_06715 from Haemophilus influenzae (strain PittEE).